The following is a 1296-amino-acid chain: DNA-directed RNA polymerase subunit beta' (1296 aa).

4 residues coordinate Zn(2+): Cys60, Cys62, Cys75, and Cys78. The span at Glu185–Asp202 shows a compositional bias: basic and acidic residues. The segment at Glu185–Gln204 is disordered. Asp535, Asp537, and Asp539 together coordinate Mg(2+). Residues Cys877, Cys954, Cys961, and Cys964 each contribute to the Zn(2+) site.

This sequence belongs to the RNA polymerase beta' chain family. As to quaternary structure, the RNAP catalytic core consists of 2 alpha, 1 beta, 1 beta' and 1 omega subunit. When a sigma factor is associated with the core the holoenzyme is formed, which can initiate transcription. Requires Mg(2+) as cofactor. Zn(2+) is required as a cofactor.

It catalyses the reaction RNA(n) + a ribonucleoside 5'-triphosphate = RNA(n+1) + diphosphate. Functionally, DNA-dependent RNA polymerase catalyzes the transcription of DNA into RNA using the four ribonucleoside triphosphates as substrates. The chain is DNA-directed RNA polymerase subunit beta' from Kocuria rhizophila (strain ATCC 9341 / DSM 348 / NBRC 103217 / DC2201).